Consider the following 149-residue polypeptide: Transcriptional repressor NrdR (149 aa).

The segment at 3-34 is a zinc-finger region; it reads CPFCSATDTKVIDSRLVADGHQVRRRRECTLC. The ATP-cone domain occupies 49-139; that stretch reads PRVIKRDDTR…VYRAFEDVSQ (91 aa).

This sequence belongs to the NrdR family. The cofactor is Zn(2+).

Functionally, negatively regulates transcription of bacterial ribonucleotide reductase nrd genes and operons by binding to NrdR-boxes. The polypeptide is Transcriptional repressor NrdR (Shewanella denitrificans (strain OS217 / ATCC BAA-1090 / DSM 15013)).